A 353-amino-acid polypeptide reads, in one-letter code: MKLEKLRNLFGQLGIDGMLITSNTNVRYMTGFTGSAGLAVISGDKAAFITDFRYTEQAKVQVKGFEIIEHGGSLIQTTADTVESFGIKRLGFEQNSMTYGTYASYSAVISDAELVPVAESVEKLRLIKSSEEIKILEEAAKIADDAFRHILTFMKPGISEIAVANELEFYMRSQGADSSSFDMIVASGLRSSLPHGVASDKLIESGDLVTLDFGAYYKGYCSDITRTVAVGQPSDQLKEIYQVVFDAQALGVAHIKPGMTGKEADALTRDHIAAKGYGDYFGHSTGHGLGMEVHESPGLSVRSSAILEPGMVVTVEPGIYIPETGGVRIEDDIVITENGNRTITHSPKELIIL.

5 residues coordinate Mn(2+): Asp212, Asp223, His287, Glu316, and Glu330.

The protein belongs to the peptidase M24B family. Mn(2+) is required as a cofactor.

This is an uncharacterized protein from Bacillus subtilis (strain 168).